The primary structure comprises 347 residues: GMP reductase (347 aa).

108–131 contacts NADP(+); that stretch reads ADFEKTKQILDLNPALNFVCIDVA. Residues glycine 181 and glycine 183 each contribute to the K(+) site. Catalysis depends on cysteine 186, which acts as the Thioimidate intermediate. 216-239 serves as a coordination point for NADP(+); sequence IVSDGGCTTPGDVAKAFGGGADFV.

The protein belongs to the IMPDH/GMPR family. GuaC type 1 subfamily. Homotetramer.

It catalyses the reaction IMP + NH4(+) + NADP(+) = GMP + NADPH + 2 H(+). Functionally, catalyzes the irreversible NADPH-dependent deamination of GMP to IMP. It functions in the conversion of nucleobase, nucleoside and nucleotide derivatives of G to A nucleotides, and in maintaining the intracellular balance of A and G nucleotides. The sequence is that of GMP reductase from Shigella boydii serotype 18 (strain CDC 3083-94 / BS512).